A 455-amino-acid chain; its full sequence is UDP-N-acetylmuramoylalanine--D-glutamate ligase (455 aa).

An ATP-binding site is contributed by 118–124; that stretch reads GSNAKST.

It belongs to the MurCDEF family.

It localises to the cytoplasm. The enzyme catalyses UDP-N-acetyl-alpha-D-muramoyl-L-alanine + D-glutamate + ATP = UDP-N-acetyl-alpha-D-muramoyl-L-alanyl-D-glutamate + ADP + phosphate + H(+). It functions in the pathway cell wall biogenesis; peptidoglycan biosynthesis. Its function is as follows. Cell wall formation. Catalyzes the addition of glutamate to the nucleotide precursor UDP-N-acetylmuramoyl-L-alanine (UMA). In Chromohalobacter salexigens (strain ATCC BAA-138 / DSM 3043 / CIP 106854 / NCIMB 13768 / 1H11), this protein is UDP-N-acetylmuramoylalanine--D-glutamate ligase.